Consider the following 177-residue polypeptide: Coatomer subunit zeta-3 (177 aa).

It belongs to the adaptor complexes small subunit family. Oligomeric complex that consists of at least the alpha, beta, beta', gamma, delta, epsilon and zeta subunits.

Its subcellular location is the cytoplasm. The protein resides in the golgi apparatus membrane. It localises to the cytoplasmic vesicle. The protein localises to the COPI-coated vesicle membrane. In terms of biological role, the coatomer is a cytosolic protein complex that binds to dilysine motifs and reversibly associates with Golgi non-clathrin-coated vesicles, which further mediate biosynthetic protein transport from the ER, via the Golgi up to the trans Golgi network. Coatomer complex is required for budding from Golgi membranes, and is essential for the retrograde Golgi-to-ER transport of dilysine-tagged proteins. The zeta subunit may be involved in regulating the coat assembly and, hence, the rate of biosynthetic protein transport due to its association-dissociation properties with the coatomer complex. The protein is Coatomer subunit zeta-3 of Oryza sativa subsp. japonica (Rice).